We begin with the raw amino-acid sequence, 214 residues long: MSDHDFDFEPQPGIPAPLPEGEEILWQGKPDMWMLARDAFKIRWMTGIMLFVAAWRTALYWHEEGARVALPTAAVLFLLMAAVVYGLMLLLAFAQARAAIYTITSARVILRIGAALQVTFTIPFTVIESMSLAKLGRKGFGTIALQNRSDMRLSYGVLWPHARPWHFRVPQAAFRCIPEAEKVARILSEAAQAKLNEPQVVAAPKAGAALAVAE.

This is an uncharacterized protein from Rhodobacter capsulatus (Rhodopseudomonas capsulata).